A 500-amino-acid polypeptide reads, in one-letter code: Transcription termination/antitermination protein NusA (500 aa).

One can recognise an S1 motif domain in the interval 135 to 205; that stretch reads GEIVTGVVKK…RGAQLFVTRS (71 aa). Residues 307–373 enclose the KH domain; sequence KHTMDIAVEA…FTKYLDIDEE (67 aa). 2 repeat units span residues 369–419 and 444–494. A 2 X 51 AA approximate repeats region spans residues 369 to 494; the sequence is DIDEEFATVL…ELIMAARNIC (126 aa).

This sequence belongs to the NusA family. As to quaternary structure, monomer. Binds directly to the core enzyme of the DNA-dependent RNA polymerase and to nascent RNA.

It is found in the cytoplasm. Functionally, participates in both transcription termination and antitermination. The chain is Transcription termination/antitermination protein NusA from Salmonella typhimurium (strain LT2 / SGSC1412 / ATCC 700720).